Consider the following 98-residue polypeptide: Keratin-associated protein 3-3 (98 aa).

Tandem repeats lie at residues 3–7 (CCASR), 47–51 (CCDNC), and 89–93 (CCEPC). A 3 X 5 AA repeats of C-C-X(3) region spans residues 3 to 59 (CCASRGCSVPTGPATTICSSDKSCRCGVCLPSTCPHTVWLLEPTCCDNCPPPCHIPQ).

It belongs to the KRTAP type 3 family. Interacts with hair keratins. In terms of tissue distribution, localized to the upper cortex of the hair shaft.

Its function is as follows. In the hair cortex, hair keratin intermediate filaments are embedded in an interfilamentous matrix, consisting of hair keratin-associated proteins (KRTAP), which are essential for the formation of a rigid and resistant hair shaft through their extensive disulfide bond cross-linking with abundant cysteine residues of hair keratins. The matrix proteins include the high-sulfur and high-glycine-tyrosine keratins. In Homo sapiens (Human), this protein is Keratin-associated protein 3-3 (KRTAP3-3).